The primary structure comprises 205 residues: DNA-directed RNA polymerases IV and V subunit 4 (205 aa).

Positions 1–79 are disordered; it reads MSEKGGKGLK…TKSSKNSLHS (79 aa). Polar residues predominate over residues 48–60; it reads NVSSDQQPFQSSA.

The protein belongs to the eukaryotic RPB4 RNA polymerase subunit family. In terms of assembly, component of the RNA polymerase IV and V complexes. Interacts with NRPD1 and NRPE1. Expressed in shoot meristematic region and in root tips. Detected in cotyledons, flowers and young leaves.

Its subcellular location is the nucleus. DNA-dependent RNA polymerase catalyzes the transcription of DNA into RNA using the four ribonucleoside triphosphates as substrates. Component of RNA polymerases IV and V which mediate short-interfering RNAs (siRNA) accumulation and subsequent RNA-directed DNA methylation-dependent (RdDM) transcriptional gene silencing (TGS) of endogenous repeated sequences, including transposable elements. Required for the de novo DNA methylation directed by the RdDM pathway. This chain is DNA-directed RNA polymerases IV and V subunit 4 (NRPD4), found in Arabidopsis thaliana (Mouse-ear cress).